A 246-amino-acid chain; its full sequence is tRNA (guanine-N(1)-)-methyltransferase (246 aa).

S-adenosyl-L-methionine contacts are provided by residues Gly-114 and 134–139; that span reads IGDYIL. The span at 219 to 231 shows a compositional bias: basic and acidic residues; it reads LRRPDLWERHEGA. A disordered region spans residues 219–246; sequence LRRPDLWERHEGARAQSPSGARRQKKER.

Belongs to the RNA methyltransferase TrmD family. Homodimer.

The protein localises to the cytoplasm. The catalysed reaction is guanosine(37) in tRNA + S-adenosyl-L-methionine = N(1)-methylguanosine(37) in tRNA + S-adenosyl-L-homocysteine + H(+). Its function is as follows. Specifically methylates guanosine-37 in various tRNAs. The protein is tRNA (guanine-N(1)-)-methyltransferase of Rhizorhabdus wittichii (strain DSM 6014 / CCUG 31198 / JCM 15750 / NBRC 105917 / EY 4224 / RW1) (Sphingomonas wittichii).